Reading from the N-terminus, the 213-residue chain is MKQALVDDTEDVSLDFGNEEELAFRKAKIRHPLATFFHLFFRVSAIVTYVSCDWFSKSFVGCFVMVLLLLSLDFWSVKNVTGRLLVGLRWWNQIDEDGKSHWIFEARKVSPNSIAATEAEARIFWLGLIICPMIWIVFFFSTLFSLKLKWLALVVAGISLQAANLYGYILCKMGGNSDIGKVTASFLSQTVFQTACPGDFQKPGLEGLEIHQH.

A run of 4 helical transmembrane segments spans residues 32–52, 54–74, 123–143, and 150–170; these read PLATFFHLFFRVSAIVTYVSC, WFSKSFVGCFVMVLLLLSLDF, IFWLGLIICPMIWIVFFFSTL, and WLALVVAGISLQAANLYGYIL.

The protein belongs to the TVP23 family.

The protein localises to the membrane. The polypeptide is Golgi apparatus membrane protein TVP23 homolog A (TVP23A) (Homo sapiens (Human)).